Here is a 303-residue protein sequence, read N- to C-terminus: MSFKEVSTENGVLTPLITIKEKAYMIIEGLNEEEIELLNTRLPKLSKKALARNRYSNIVPYENTRVRLDPMWKEACDYINASIVKIPSGKTFIATQGPTSNSIDVFWKMVWQSVPKSGIIVMLTKLRERHRLKCDIYWPVELFETLNIGDLSVILVKVYTLTSLNEVQVREFELNKDGVKKKILHFYYNGWPDFGAPHTFSLLSLTRYIKSLSYSPDFETAPIIVHCSAGCGRTGTFMALFEILSQTDDSTSTSKFEVDNIANIVSSLRSQRMQSVQSVDQLVFLYTVSQELLQGKEFLLPQL.

The region spanning 24-292 (YMIIEGLNEE…VFLYTVSQEL (269 aa)) is the Tyrosine-protein phosphatase domain. C227 functions as the Phosphocysteine intermediate in the catalytic mechanism.

It belongs to the protein-tyrosine phosphatase family. Non-receptor class subfamily.

It localises to the cytoplasm. The catalysed reaction is O-phospho-L-tyrosyl-[protein] + H2O = L-tyrosyl-[protein] + phosphate. Functionally, contributes to dephosphorylation of tyrosine 15 of cdc2. The chain is Tyrosine-protein phosphatase 3 (pyp3) from Schizosaccharomyces pombe (strain 972 / ATCC 24843) (Fission yeast).